The primary structure comprises 503 residues: Cytochrome P450 3A9 (503 aa).

C442 contacts heme.

The protein belongs to the cytochrome P450 family. Heme is required as a cofactor. In terms of tissue distribution, mainly expressed in olfactory epithelium.

The protein resides in the endoplasmic reticulum membrane. Its subcellular location is the microsome membrane. It catalyses the reaction an organic molecule + reduced [NADPH--hemoprotein reductase] + O2 = an alcohol + oxidized [NADPH--hemoprotein reductase] + H2O + H(+). In terms of biological role, this isozyme seems to be implicated in olfaction. Active in the demethylation of erythromycin as well as benzphetamine. The protein is Cytochrome P450 3A9 (Cyp3a9) of Rattus norvegicus (Rat).